A 331-amino-acid polypeptide reads, in one-letter code: Osmotic avoidance abnormal protein 8 (331 aa).

Positions 1-21 (MPAKMLKWLLIHIFLIHSIFC) are cleaved as a signal peptide.

In terms of tissue distribution, expressed in the hypodermal syncitium but not in hypodermal seam cells.

The protein resides in the secreted. In terms of biological role, negative regulator of the osmotic stress response. Acts via the transmembrane protein ptr-23. The sequence is that of Osmotic avoidance abnormal protein 8 (osm-8) from Caenorhabditis elegans.